The sequence spans 159 residues: Late embryogenesis abundant protein 50 (159 aa).

2 consecutive SMP domains span residues 30–87 (TTLT…RNQK) and 96–151 (NLGD…YKLN).

It belongs to the LEA type SMP family.

The protein localises to the cytoplasm. It is found in the nucleus. Its function is as follows. LEA proteins are late embryonic proteins abundant in higher plant seed embryos. The function of those proteins is not known. In Arabidopsis thaliana (Mouse-ear cress), this protein is Late embryogenesis abundant protein 50.